Consider the following 89-residue polypeptide: Small ribosomal subunit protein uS15 (89 aa).

This sequence belongs to the universal ribosomal protein uS15 family. Part of the 30S ribosomal subunit. Forms a bridge to the 50S subunit in the 70S ribosome, contacting the 23S rRNA.

Functionally, one of the primary rRNA binding proteins, it binds directly to 16S rRNA where it helps nucleate assembly of the platform of the 30S subunit by binding and bridging several RNA helices of the 16S rRNA. In terms of biological role, forms an intersubunit bridge (bridge B4) with the 23S rRNA of the 50S subunit in the ribosome. The protein is Small ribosomal subunit protein uS15 of Edwardsiella ictaluri (strain 93-146).